Reading from the N-terminus, the 157-residue chain is Cell cycle control protein 50C (157 aa).

Residues 1–34 (MEERAQHCLSRLLDNSALKQQELPIHRLYFTARR) lie on the Cytoplasmic side of the membrane. A helical membrane pass occupies residues 35-55 (VLFVFFATGIFCLCMGIILIL). Over 56–157 (SARSTQEIEI…LFLNQVDFSV (102 aa)) the chain is Extracellular. A glycan (N-linked (GlcNAc...) asparagine) is linked at asparagine 66.

It belongs to the CDC50/LEM3 family.

The protein localises to the membrane. This Pan troglodytes (Chimpanzee) protein is Cell cycle control protein 50C (TMEM30C).